A 309-amino-acid chain; its full sequence is Aspartate carbamoyltransferase catalytic subunit (309 aa).

2 residues coordinate carbamoyl phosphate: Arg-55 and Thr-56. Residue Lys-85 participates in L-aspartate binding. Carbamoyl phosphate contacts are provided by Arg-106, His-135, and Gln-138. Residues Arg-168 and Arg-230 each contribute to the L-aspartate site. Residues Leu-268 and Pro-269 each coordinate carbamoyl phosphate.

Belongs to the aspartate/ornithine carbamoyltransferase superfamily. ATCase family. As to quaternary structure, heterododecamer (2C3:3R2) of six catalytic PyrB chains organized as two trimers (C3), and six regulatory PyrI chains organized as three dimers (R2).

The catalysed reaction is carbamoyl phosphate + L-aspartate = N-carbamoyl-L-aspartate + phosphate + H(+). Its pathway is pyrimidine metabolism; UMP biosynthesis via de novo pathway; (S)-dihydroorotate from bicarbonate: step 2/3. Functionally, catalyzes the condensation of carbamoyl phosphate and aspartate to form carbamoyl aspartate and inorganic phosphate, the committed step in the de novo pyrimidine nucleotide biosynthesis pathway. The chain is Aspartate carbamoyltransferase catalytic subunit from Vibrio cholerae serotype O1 (strain ATCC 39541 / Classical Ogawa 395 / O395).